We begin with the raw amino-acid sequence, 356 residues long: NADH-quinone oxidoreductase subunit H (356 aa).

The next 9 membrane-spanning stretches (helical) occupy residues 17 to 37 (TGGI…LLLA), 51 to 71 (PNVV…KFVL), 83 to 103 (VVFI…WAVV), 116 to 136 (VGIL…IMGG), 162 to 182 (IGLI…STIV), 202 to 222 (LVLL…ALAE), 261 to 281 (IVLM…PGFP), 295 to 315 (LFLA…FAMA), and 334 to 354 (VFLP…VFGP).

Belongs to the complex I subunit 1 family. NDH-1 is composed of 14 different subunits. Subunits NuoA, H, J, K, L, M, N constitute the membrane sector of the complex.

It is found in the cell inner membrane. The catalysed reaction is a quinone + NADH + 5 H(+)(in) = a quinol + NAD(+) + 4 H(+)(out). Its function is as follows. NDH-1 shuttles electrons from NADH, via FMN and iron-sulfur (Fe-S) centers, to quinones in the respiratory chain. The immediate electron acceptor for the enzyme in this species is believed to be ubiquinone. Couples the redox reaction to proton translocation (for every two electrons transferred, four hydrogen ions are translocated across the cytoplasmic membrane), and thus conserves the redox energy in a proton gradient. This subunit may bind ubiquinone. The polypeptide is NADH-quinone oxidoreductase subunit H (Caulobacter vibrioides (strain ATCC 19089 / CIP 103742 / CB 15) (Caulobacter crescentus)).